A 131-amino-acid chain; its full sequence is Large ribosomal subunit protein bL17 (131 aa).

The protein belongs to the bacterial ribosomal protein bL17 family. In terms of assembly, part of the 50S ribosomal subunit. Contacts protein L32.

The sequence is that of Large ribosomal subunit protein bL17 from Shewanella frigidimarina (strain NCIMB 400).